A 1513-amino-acid chain; its full sequence is Lid2 complex component lid2 (1513 aa).

One can recognise a JmjN domain in the interval 56–97 (GLSVQLNASNMTDPFKFLLDNWHTIFKNGAIKLLPPEGWQIP). Residues 121 to 212 (YEKNYDYFKK…YIKPFERDSS (92 aa)) form the ARID domain. A disordered region spans residues 211-253 (SSPSFKSKRSESSTRKIRNTRSSAQQESPIPETSAQSPVQTIQ). The segment covering 230 to 253 (TRSSAQQESPIPETSAQSPVQTIQ) has biased composition (polar residues). The PHD-type 1 zinc-finger motif lies at 268–318 (GEQCEYCGLDKNPETILLCDGCEAAYHTSCLDPPLTSIPKEDWYCDACKFN). Positions 408 to 574 (KYSSEPWNLH…DGLLNSSISV (167 aa)) constitute a JmjC domain. S722 is modified (phosphoserine). Residues 1063-1086 (LSLNDRPGPPMEPASRETSPDSEG) form a disordered region. Over residues 1076-1086 (ASRETSPDSEG) the composition is skewed to basic and acidic residues. A PHD-type 2 zinc finger spans residues 1093 to 1145 (KKGCIFCFCRLPESGVMIECEICHEWYHAKCLKMSKKKLRQDEKFTCPICDYR). An RING-type 1; degenerate zinc finger spans residues 1096–1143 (CIFCFCRLPESGVMIECEICHEWYHAKCLKMSKKKLRQDEKFTCPICD). Disordered regions lie at residues 1244-1268 (APNPPPIIGESKSTRKPRPTKRQRQ) and 1280-1327 (ASAI…NNKN). Residues 1257-1268 (TRKPRPTKRQRQ) show a composition bias toward basic residues. A compositionally biased stretch (basic and acidic residues) spans 1301-1313 (VEAETKSKSEKSP). Positions 1316-1326 (NGTNISDANNK) are enriched in polar residues. Residues 1352 to 1403 (NSSCLCGEEFSPRDSFIDCTICERRFHYDCVGLNNEIADSVSKFTCPICMEQ) form a PHD-type 3 zinc finger. The segment at 1354 to 1401 (SCLCGEEFSPRDSFIDCTICERRFHYDCVGLNNEIADSVSKFTCPICM) adopts an RING-type 2; degenerate zinc-finger fold.

Component of the Lid2 complex composed of ash2, jmj3, lid2, sdc1 and snt2.

It is found in the nucleus. This is Lid2 complex component lid2 (lid2) from Schizosaccharomyces pombe (strain 972 / ATCC 24843) (Fission yeast).